A 129-amino-acid polypeptide reads, in one-letter code: Small ribosomal subunit protein uS11 (129 aa).

Belongs to the universal ribosomal protein uS11 family. In terms of assembly, part of the 30S ribosomal subunit. Interacts with proteins S7 and S18. Binds to IF-3.

Located on the platform of the 30S subunit, it bridges several disparate RNA helices of the 16S rRNA. Forms part of the Shine-Dalgarno cleft in the 70S ribosome. In Phenylobacterium zucineum (strain HLK1), this protein is Small ribosomal subunit protein uS11.